The sequence spans 369 residues: 3-dehydroquinate synthase (369 aa).

NAD(+)-binding positions include 75 to 80 (DGEEHK), 109 to 113 (GVIGD), 133 to 134 (TT), Lys-146, Lys-155, and 173 to 176 (TLKT). Glu-188, His-251, and His-268 together coordinate Zn(2+).

Belongs to the sugar phosphate cyclases superfamily. Dehydroquinate synthase family. The cofactor is Co(2+). It depends on Zn(2+) as a cofactor. NAD(+) serves as cofactor.

Its subcellular location is the cytoplasm. It catalyses the reaction 7-phospho-2-dehydro-3-deoxy-D-arabino-heptonate = 3-dehydroquinate + phosphate. Its pathway is metabolic intermediate biosynthesis; chorismate biosynthesis; chorismate from D-erythrose 4-phosphate and phosphoenolpyruvate: step 2/7. In terms of biological role, catalyzes the conversion of 3-deoxy-D-arabino-heptulosonate 7-phosphate (DAHP) to dehydroquinate (DHQ). This chain is 3-dehydroquinate synthase, found in Legionella pneumophila (strain Corby).